Reading from the N-terminus, the 370-residue chain is Gibberellin 3-beta-dioxygenase 2-2 (370 aa).

Residues 205-306 (MTATMHLNWY…RISLGYFLGP (102 aa)) enclose the Fe2OG dioxygenase domain. Positions 229, 231, and 287 each coordinate Fe cation. The active site involves R297.

Belongs to the iron/ascorbate-dependent oxidoreductase family. GA3OX subfamily. Requires L-ascorbate as cofactor. The cofactor is Fe cation.

It catalyses the reaction gibberellin A20 + 2-oxoglutarate + O2 = gibberellin A1 + succinate + CO2. In terms of biological role, converts the inactive gibberellin precursors GA9 and GA20 in the bioactives gibberellins GA4 and GA1. The sequence is that of Gibberellin 3-beta-dioxygenase 2-2 (GA3ox2-2) from Triticum aestivum (Wheat).